We begin with the raw amino-acid sequence, 65 residues long: MNVKILVLVAVLCLVVSTHAERHSKTDMEDSPMIQERKCLPPGKPCYGATQKIPCCGVCSHNNCT.

Positions 1 to 20 are cleaved as a signal peptide; the sequence is MNVKILVLVAVLCLVVSTHA. A propeptide spanning residues 21-37 is cleaved from the precursor; the sequence is ERHSKTDMEDSPMIQER. 3 cysteine pairs are disulfide-bonded: C39–C56, C46–C59, and C55–C64.

Belongs to the neurotoxin 36 family. 02 subfamily. As to expression, expressed by the venom gland.

It localises to the secreted. Its function is as follows. Reversibly blocks N-type calcium channels (Cav2.2/CACNA1B) in rat dorsal root ganglion cells. Elicits no toxic symptoms in either vertebrates or invertebrates during a period of 48 hours post-injection, when it was assayed in vivo by direct injection into mice and cockroaches. In Cyriopagopus hainanus (Chinese bird spider), this protein is Hainantoxin-X.2.